The sequence spans 52 residues: Rubredoxin (52 aa).

In terms of domain architecture, Rubredoxin-like spans 1 to 52 (MEKWQCTVCGYIYDPEVGDPTQNIPPGTKFEDLPDDWVCPDCGVGKDQFEKI). Residues cysteine 6, cysteine 9, cysteine 39, and cysteine 42 each contribute to the Fe cation site.

The protein belongs to the rubredoxin family. Fe(3+) is required as a cofactor.

In terms of biological role, rubredoxin is a small nonheme, iron protein lacking acid-labile sulfide. Its single Fe, chelated to 4 Cys, functions as an electron acceptor and may also stabilize the conformation of the molecule. The chain is Rubredoxin from Thermoanaerobacterium thermosaccharolyticum (strain ATCC 7956 / DSM 571 / NCIMB 9385 / NCA 3814 / NCTC 13789 / WDCM 00135 / 2032) (Clostridium thermosaccharolyticum).